We begin with the raw amino-acid sequence, 96 residues long: Prokineticin Bm8-b (96 aa).

The first 19 residues, 1–19 (MKCFAQIVVLLLVIAFSHG), serve as a signal peptide directing secretion. 4 disulfide bridges follow: Cys32/Cys50, Cys37/Cys78, Cys60/Cys86, and Cys80/Cys95.

This sequence belongs to the AVIT (prokineticin) family. Expressed by the skin glands.

The protein localises to the secreted. Potent agonist for both PKR1/PROKR1 and PKR2/PROKR2, and inducer of a potent and long-lasting hyperalgesia. Also potentiates capsaicin-induced TRPV1 current, when tested on DRG neurons. At subnanomolar concentrations, this protein both induces potent chemotaxis of macrophages and stimulates LPS-induced production of the pro-inflammatory cytokines IL-1 and IL-12. In vivo, potently stimulates the contraction of the guinea-pig gastrointestinal (GI) smooth muscle (nanomolar concentration). In Bombina maxima (Giant fire-bellied toad), this protein is Prokineticin Bm8-b.